A 442-amino-acid chain; its full sequence is 3-phosphoshikimate 1-carboxyvinyltransferase (442 aa).

3-phosphoshikimate-binding residues include lysine 25, serine 26, and arginine 30. A phosphoenolpyruvate-binding site is contributed by lysine 25. The phosphoenolpyruvate site is built by glycine 96 and arginine 124. 3-phosphoshikimate-binding residues include serine 171, serine 172, glutamine 173, serine 203, aspartate 325, and lysine 352. Residue glutamine 173 coordinates phosphoenolpyruvate. Aspartate 325 functions as the Proton acceptor in the catalytic mechanism. Arginine 356, arginine 400, and lysine 425 together coordinate phosphoenolpyruvate.

This sequence belongs to the EPSP synthase family. As to quaternary structure, monomer.

Its subcellular location is the cytoplasm. The catalysed reaction is 3-phosphoshikimate + phosphoenolpyruvate = 5-O-(1-carboxyvinyl)-3-phosphoshikimate + phosphate. The protein operates within metabolic intermediate biosynthesis; chorismate biosynthesis; chorismate from D-erythrose 4-phosphate and phosphoenolpyruvate: step 6/7. Catalyzes the transfer of the enolpyruvyl moiety of phosphoenolpyruvate (PEP) to the 5-hydroxyl of shikimate-3-phosphate (S3P) to produce enolpyruvyl shikimate-3-phosphate and inorganic phosphate. This chain is 3-phosphoshikimate 1-carboxyvinyltransferase, found in Bordetella bronchiseptica (strain ATCC BAA-588 / NCTC 13252 / RB50) (Alcaligenes bronchisepticus).